Consider the following 293-residue polypeptide: Acetylglutamate kinase (293 aa).

Substrate is bound by residues 71–72 (GG), arginine 93, and asparagine 186.

The protein belongs to the acetylglutamate kinase family. ArgB subfamily.

Its subcellular location is the cytoplasm. It carries out the reaction N-acetyl-L-glutamate + ATP = N-acetyl-L-glutamyl 5-phosphate + ADP. Its pathway is amino-acid biosynthesis; L-arginine biosynthesis; N(2)-acetyl-L-ornithine from L-glutamate: step 2/4. In terms of biological role, catalyzes the ATP-dependent phosphorylation of N-acetyl-L-glutamate. This chain is Acetylglutamate kinase, found in Synechococcus sp. (strain WH7803).